Reading from the N-terminus, the 345-residue chain is Serpentine receptor class beta-13 (345 aa).

Over 1–22 (MAGINQTKCDLGFQITFNTVYR) the chain is Extracellular. N5 carries an N-linked (GlcNAc...) asparagine glycan. The chain crosses the membrane as a helical span at residues 23 to 43 (FSQFYTFSVSSFAVPGLIYFM). The Cytoplasmic portion of the chain corresponds to 44 to 58 (FKRLFQLYFHGNLKT). The chain crosses the membrane as a helical span at residues 59 to 79 (LLIAYFISILLYAVMLCFAFG). At 80 to 103 (YQFFVPFFIKSNCDLIINKTLFKY) the chain is on the extracellular side. N-linked (GlcNAc...) asparagine glycosylation occurs at N97. The helical transmembrane segment at 104–124 (IHTSVIFLLTTPMMFPLGFSI) threads the bilayer. Residues 125–142 (ERFTAMAMASRYENIRTL) are Cytoplasmic-facing. Residues 143-163 (IGPVLVIFLIIPNCIIFYFLF) traverse the membrane as a helical segment. The Extracellular segment spans residues 164 to 189 (QHETYDDTFISFLMLPNTTAVNFNTY). N-linked (GlcNAc...) asparagine glycosylation occurs at N180. A helical membrane pass occupies residues 190–210 (LWFLLYLNIGNLALNVLLLLV). Topologically, residues 211 to 241 (HRKFKRRLLLHKTSLSTRYAIEEISQSSKFT) are cytoplasmic. A helical membrane pass occupies residues 242-262 (LIITFTHLLFFGCNTICSILV). Over 263–280 (RVLGEPFFGSFINHSVAR) the chain is Extracellular. N275 carries an N-linked (GlcNAc...) asparagine glycan. A helical membrane pass occupies residues 281–301 (GVNCAVPTYNLVIVVVGFVSL). At 302–345 (SKLNSRRQQEVQTTVQLKTTGKEGARNYDNITANQWATITQIGF) the chain is on the cytoplasmic side.

Belongs to the nematode receptor-like protein srb family. Expressed in the head sensory neurons ASI, ASK and AWB. Not expressed in male somatic gonads or sperm.

It is found in the cell membrane. Its subcellular location is the perikaryon. It localises to the cell projection. The protein resides in the dendrite. In terms of biological role, G-protein coupled receptor that antagonizes the negative effects of the gcy-35 oxygen sensor on spermatogenesis. This leads to the maintenance of mitochondrial function in developing spermatocytes and/or spermatids prior to testis maturation during the early larval stages. Regulates the navigational capacity of sperm during hyperoxic conditions ensuring the proper targeting of sperm derived from males to the fertilization site in the uterus of hermaphrodites. May act in the same signaling pathway as the neuropeptide flp-21. The sequence is that of Serpentine receptor class beta-13 from Caenorhabditis elegans.